We begin with the raw amino-acid sequence, 336 residues long: D-altritol 5-dehydrogenase (336 aa).

Cys37, His59, Glu60, Cys89, Cys92, Cys95, and Cys103 together coordinate Zn(2+).

Belongs to the zinc-containing alcohol dehydrogenase family. Zn(2+) serves as cofactor.

It catalyses the reaction D-altritol + NAD(+) = keto-D-tagatose + NADH + H(+). Its pathway is carbohydrate metabolism. Involved in D-altritol catabolism. Catalyzes the oxidation of D-altritol to D-tagatose. This Agrobacterium fabrum (strain C58 / ATCC 33970) (Agrobacterium tumefaciens (strain C58)) protein is D-altritol 5-dehydrogenase.